Here is a 207-residue protein sequence, read N- to C-terminus: 23 kDa calcium-binding protein (207 aa).

At methionine 1 the chain carries Blocked amino end (Met). EF-hand domains are found at residues 17-52 (AKLD…TFEN), 60-95 (VTAD…CLKK), 119-154 (MKLD…TYKQ), and 161-196 (PTEA…GLKK). Residues aspartate 30, asparagine 32, asparagine 34, threonine 36, glutamate 41, aspartate 73, aspartate 75, asparagine 77, glutamate 84, aspartate 132, aspartate 134, serine 136, glutamine 138, glutamate 143, aspartate 174, aspartate 176, asparagine 178, threonine 180, and glutamate 185 each coordinate Ca(2+).

Its function is as follows. Expected to play a crucial role in calcium-dependent regulation of ciliary movement. The polypeptide is 23 kDa calcium-binding protein (Tetrahymena thermophila).